We begin with the raw amino-acid sequence, 67 residues long: Large ribosomal subunit protein bL31c (67 aa).

This sequence belongs to the bacterial ribosomal protein bL31 family. Type A subfamily. As to quaternary structure, part of the 50S ribosomal subunit.

The protein resides in the plastid. It localises to the chloroplast. Its function is as follows. Binds the 23S rRNA. In Cyanidioschyzon merolae (strain NIES-3377 / 10D) (Unicellular red alga), this protein is Large ribosomal subunit protein bL31c (rpl31).